Reading from the N-terminus, the 137-residue chain is uncharacterized protein (137 aa).

Positions 67 to 87 (KSERQHQRVHHELPHDKPRQS) are disordered. Residues 70-85 (RQHQRVHHELPHDKPR) are compositionally biased toward basic and acidic residues.

This is an uncharacterized protein from Human cytomegalovirus (strain AD169) (HHV-5).